The primary structure comprises 253 residues: Sulfate transporter CysZ (253 aa).

The next 4 membrane-spanning stretches (helical) occupy residues 31 to 51, 75 to 95, 151 to 171, and 222 to 242; these read FVIL…WWLF, LLWP…FSTI, IVLL…PVLW, and IPLL…AMWV.

The protein belongs to the CysZ family.

The protein localises to the cell inner membrane. In terms of biological role, high affinity, high specificity proton-dependent sulfate transporter, which mediates sulfate uptake. Provides the sulfur source for the cysteine synthesis pathway. This Escherichia coli O139:H28 (strain E24377A / ETEC) protein is Sulfate transporter CysZ.